The chain runs to 159 residues: Ribosomal RNA large subunit methyltransferase H (159 aa).

Residues Leu-76 and Gly-108 each coordinate S-adenosyl-L-methionine.

Belongs to the RNA methyltransferase RlmH family. As to quaternary structure, homodimer.

The protein localises to the cytoplasm. The catalysed reaction is pseudouridine(1915) in 23S rRNA + S-adenosyl-L-methionine = N(3)-methylpseudouridine(1915) in 23S rRNA + S-adenosyl-L-homocysteine + H(+). Its function is as follows. Specifically methylates the pseudouridine at position 1915 (m3Psi1915) in 23S rRNA. The sequence is that of Ribosomal RNA large subunit methyltransferase H from Limosilactobacillus fermentum (strain NBRC 3956 / LMG 18251) (Lactobacillus fermentum).